The primary structure comprises 156 residues: MALEKSLVLLPLLVLILLVLGWVQPSLGKESRAKKFQRQHVDSDSSPSSSSTYCNQMMRRRNMTQGRCKPVNTFVHEPLVDVQNVCFQEKVTCKNGQGNCYKSNSSMRITDCRLTNGSRYPNCAYRTSPKERHIIVACEGSPYVPVHFDASVEDST.

Residues 1 to 28 (MALEKSLVLLPLLVLILLVLGWVQPSLG) form the signal peptide. Residues 33–43 (AKKFQRQHVDS) are compositionally biased toward basic and acidic residues. Residues 33 to 53 (AKKFQRQHVDSDSSPSSSSTY) are disordered. Lys35 and Arg38 together coordinate substrate. His40 functions as the Proton acceptor in the catalytic mechanism. Cystine bridges form between Cys54-Cys112, Cys68-Cys123, Cys86-Cys138, and Cys93-Cys100. N-linked (GlcNAc...) asparagine glycosylation is present at Asn62. Residues 69–73 (KPVNT) and Lys94 contribute to the substrate site. An N-linked (GlcNAc...) asparagine glycan is attached at Asn104. Arg113 provides a ligand contact to substrate. N-linked (GlcNAc...) asparagine glycosylation is present at Asn116. His147 acts as the Proton donor in catalysis.

Belongs to the pancreatic ribonuclease family. Monomer. Interacts with and forms tight 1:1 complexes with RNH1. Dimerization of two such complexes may occur. Interaction with RNH1 inhibits this protein. Pancreas and other tissues and body fluids (indicating it may have other physiological functions besides its role in digestion).

The protein resides in the secreted. The enzyme catalyses an [RNA] containing cytidine + H2O = an [RNA]-3'-cytidine-3'-phosphate + a 5'-hydroxy-ribonucleotide-3'-[RNA].. The catalysed reaction is an [RNA] containing uridine + H2O = an [RNA]-3'-uridine-3'-phosphate + a 5'-hydroxy-ribonucleotide-3'-[RNA].. In terms of biological role, endonuclease that catalyzes the cleavage of RNA on the 3' side of pyrimidine nucleotides. Acts on single-stranded and double-stranded RNA. The chain is Ribonuclease pancreatic (RNASE1) from Pan troglodytes (Chimpanzee).